The primary structure comprises 119 residues: Large ribosomal subunit protein uL14 (119 aa).

This sequence belongs to the universal ribosomal protein uL14 family. In terms of assembly, part of the 50S ribosomal subunit. Forms a cluster with proteins L3 and L19. In the 70S ribosome, L14 and L19 interact and together make contacts with the 16S rRNA in bridges B5 and B8.

Functionally, binds to 23S rRNA. Forms part of two intersubunit bridges in the 70S ribosome. The sequence is that of Large ribosomal subunit protein uL14 from Anaplasma marginale (strain St. Maries).